Reading from the N-terminus, the 93-residue chain is NADH-ubiquinone oxidoreductase chain 4L (93 aa).

3 helical membrane passes run 1 to 21 (MVWM…VIFR), 29 to 49 (LFVG…VFLM), and 54 to 74 (LILL…ALLV).

This sequence belongs to the complex I subunit 4L family.

The protein localises to the mitochondrion membrane. It carries out the reaction a ubiquinone + NADH + 5 H(+)(in) = a ubiquinol + NAD(+) + 4 H(+)(out). In terms of biological role, core subunit of the mitochondrial membrane respiratory chain NADH dehydrogenase (Complex I) that is believed to belong to the minimal assembly required for catalysis. Complex I functions in the transfer of electrons from NADH to the respiratory chain. The immediate electron acceptor for the enzyme is believed to be ubiquinone. The sequence is that of NADH-ubiquinone oxidoreductase chain 4L (ND4L) from Mytilus edulis (Blue mussel).